The primary structure comprises 207 residues: LexA repressor (207 aa).

Residues 28 to 48 (VREIGEAVGLASSSTVHGHLS) constitute a DNA-binding region (H-T-H motif). Active-site for autocatalytic cleavage activity residues include S129 and K167.

This sequence belongs to the peptidase S24 family. As to quaternary structure, homodimer.

The catalysed reaction is Hydrolysis of Ala-|-Gly bond in repressor LexA.. In terms of biological role, represses a number of genes involved in the response to DNA damage (SOS response), including recA and lexA. In the presence of single-stranded DNA, RecA interacts with LexA causing an autocatalytic cleavage which disrupts the DNA-binding part of LexA, leading to derepression of the SOS regulon and eventually DNA repair. This is LexA repressor from Halalkalibacterium halodurans (strain ATCC BAA-125 / DSM 18197 / FERM 7344 / JCM 9153 / C-125) (Bacillus halodurans).